An 87-amino-acid chain; its full sequence is Small ribosomal subunit protein bS18 (87 aa).

It belongs to the bacterial ribosomal protein bS18 family. Part of the 30S ribosomal subunit. Forms a tight heterodimer with protein bS6.

In terms of biological role, binds as a heterodimer with protein bS6 to the central domain of the 16S rRNA, where it helps stabilize the platform of the 30S subunit. The polypeptide is Small ribosomal subunit protein bS18 (Mesomycoplasma hyopneumoniae (strain 232) (Mycoplasma hyopneumoniae)).